We begin with the raw amino-acid sequence, 286 residues long: MPELPEVEVVRRGLERWVAHRTVADVEVLHPRAVRRHTAGGEDFAHRLKGRRVGVPSRRGKYLWLPLETTDTAVLAHLGMSGQLLVQPHDCADERHLRIRVRFADALGTELRFVDQRTFGGLSLHDTTPDGLPDVIAHIARDPLDPLFDDAAFHEALRRKRTTVKRALLDQSLISGVGNIYADEALWRARIHYERPTAGFTRPRTAELLGHVRDVMNAALAVGGTSFDSLYVNVNGESGYFDRSLDAYGREGLPCRRCATPMRRRPWMNRSSYFCPKCQRAPRVTV.

Pro-2 (schiff-base intermediate with DNA) is an active-site residue. Catalysis depends on Glu-3, which acts as the Proton donor. The active-site Proton donor; for beta-elimination activity is the Lys-61. Positions 96, 117, and 160 each coordinate DNA. The segment at 246–280 (DAYGREGLPCRRCATPMRRRPWMNRSSYFCPKCQR) adopts an FPG-type zinc-finger fold. Arg-270 serves as the catalytic Proton donor; for delta-elimination activity.

The protein belongs to the FPG family. As to quaternary structure, monomer. The cofactor is Zn(2+).

The catalysed reaction is Hydrolysis of DNA containing ring-opened 7-methylguanine residues, releasing 2,6-diamino-4-hydroxy-5-(N-methyl)formamidopyrimidine.. The enzyme catalyses 2'-deoxyribonucleotide-(2'-deoxyribose 5'-phosphate)-2'-deoxyribonucleotide-DNA = a 3'-end 2'-deoxyribonucleotide-(2,3-dehydro-2,3-deoxyribose 5'-phosphate)-DNA + a 5'-end 5'-phospho-2'-deoxyribonucleoside-DNA + H(+). Functionally, involved in base excision repair of DNA damaged by oxidation or by mutagenic agents. Acts as a DNA glycosylase that recognizes and removes damaged bases. Has a preference for oxidized purines, such as 7,8-dihydro-8-oxoguanine (8-oxoG). Has AP (apurinic/apyrimidinic) lyase activity and introduces nicks in the DNA strand. Cleaves the DNA backbone by beta-delta elimination to generate a single-strand break at the site of the removed base with both 3'- and 5'-phosphates. The polypeptide is Formamidopyrimidine-DNA glycosylase (Streptomyces avermitilis (strain ATCC 31267 / DSM 46492 / JCM 5070 / NBRC 14893 / NCIMB 12804 / NRRL 8165 / MA-4680)).